Here is a 486-residue protein sequence, read N- to C-terminus: Cardiolipin synthase A (486 aa).

Transmembrane regions (helical) follow at residues 3 to 23 (TFYT…IAGV) and 38 to 58 (MAWL…YLSL). 2 consecutive PLD phosphodiesterase domains span residues 219 to 246 (MDLR…VDPR) and 399 to 426 (EGGL…DMRS). Residues His224, Lys226, Asp231, His404, Lys406, and Asp411 contribute to the active site.

Belongs to the phospholipase D family. Cardiolipin synthase subfamily. ClsA sub-subfamily.

Its subcellular location is the cell inner membrane. The enzyme catalyses 2 a 1,2-diacyl-sn-glycero-3-phospho-(1'-sn-glycerol) = a cardiolipin + glycerol. Functionally, catalyzes the reversible phosphatidyl group transfer from one phosphatidylglycerol molecule to another to form cardiolipin (CL) (diphosphatidylglycerol) and glycerol. The sequence is that of Cardiolipin synthase A from Erwinia tasmaniensis (strain DSM 17950 / CFBP 7177 / CIP 109463 / NCPPB 4357 / Et1/99).